The chain runs to 238 residues: Envelope glycoprotein G (238 aa).

The N-terminal stretch at 1 to 24 (MSQGAMRAVVPIIPFLLVLVGVSG) is a signal peptide. Topologically, residues 25–189 (VPTNVSSTTQ…SFLTASPALD (165 aa)) are virion surface. N-linked (GlcNAc...) asparagine; by host glycans are attached at residues Asn-28 and Asn-49. Composition is skewed to polar residues over residues 28 to 42 (NVSS…TTGR) and 49 to 68 (NMTQ…TTPD). Positions 28–171 (NVSSTTQPQL…LTSKGRPLVP (144 aa)) are disordered. Positions 78-88 (LEEEEEEEGAG) are enriched in acidic residues. Residues 89-100 (DGEHLEGGDGTR) show a composition bias toward basic and acidic residues. The helical transmembrane segment at 190–210 (TLFVVSTVIHTLSFLCIGAMA) threads the bilayer. At 211–238 (THLCGGWSRRGRRTHPSVRYVCLPSERG) the chain is on the intravirion side.

This sequence belongs to the alphaherpesvirinae glycoprotein G family.

The protein resides in the virion membrane. Chemokine-binding protein that inhibits neutrophils' chemotaxis. The sequence is that of Envelope glycoprotein G (gG) from Human herpesvirus 1 (strain 17) (HHV-1).